The following is a 273-amino-acid chain: Putative phosphoenolpyruvate synthase regulatory protein (273 aa).

153–160 (AVSRAGKT) is an ADP binding site.

The protein belongs to the pyruvate, phosphate/water dikinase regulatory protein family. PSRP subfamily.

It carries out the reaction [pyruvate, water dikinase] + ADP = [pyruvate, water dikinase]-phosphate + AMP + H(+). The enzyme catalyses [pyruvate, water dikinase]-phosphate + phosphate + H(+) = [pyruvate, water dikinase] + diphosphate. In terms of biological role, bifunctional serine/threonine kinase and phosphorylase involved in the regulation of the phosphoenolpyruvate synthase (PEPS) by catalyzing its phosphorylation/dephosphorylation. This chain is Putative phosphoenolpyruvate synthase regulatory protein, found in Xylella fastidiosa (strain M12).